We begin with the raw amino-acid sequence, 265 residues long: Ni-sirohydrochlorin a,c-diamide reductive cyclase complex, component CfbC (265 aa).

It belongs to the NifH/BchL/ChlL family. As to quaternary structure, homodimer. The Ni-sirohydrochlorin a,c-diamide reductive cyclase complex is composed of a NifH homolog component CfbC and a NifD homolog component CfbD. The cofactor is [4Fe-4S] cluster.

The catalysed reaction is Ni-sirohydrochlorin a,c-diamide + 3 AH2 + ATP + H2O = 15,17(3)-seco-F430-17(3)-acid + 3 A + ADP + phosphate. Functionally, involved in the biosynthesis of the unique nickel-containing tetrapyrrole coenzyme F430, the prosthetic group of methyl-coenzyme M reductase (MCR), which plays a key role in methanogenesis and anaerobic methane oxidation. Catalyzes both the six-electron reduction of the tetrahydroporphyrin ring system and the gamma-lactamization of the c-acetamide side chain of Ni-sirohydrochlorin a,c-diamide to yield 15,17(3)-seco-F430-17(3)-acid (seco-F430), the last intermediate in the biosynthesis of the coenzyme F430. This chain is Ni-sirohydrochlorin a,c-diamide reductive cyclase complex, component CfbC, found in Methanosarcina barkeri (strain Fusaro / DSM 804).